The primary structure comprises 343 residues: Ribosomal RNA small subunit methyltransferase H (343 aa).

S-adenosyl-L-methionine is bound by residues 39 to 41 (AGH), Asp-58, Phe-87, Asp-108, and Gln-115.

This sequence belongs to the methyltransferase superfamily. RsmH family.

Its subcellular location is the cytoplasm. It carries out the reaction cytidine(1402) in 16S rRNA + S-adenosyl-L-methionine = N(4)-methylcytidine(1402) in 16S rRNA + S-adenosyl-L-homocysteine + H(+). Its function is as follows. Specifically methylates the N4 position of cytidine in position 1402 (C1402) of 16S rRNA. The polypeptide is Ribosomal RNA small subunit methyltransferase H (Bifidobacterium adolescentis (strain ATCC 15703 / DSM 20083 / NCTC 11814 / E194a)).